The sequence spans 358 residues: Isopentenyl-diphosphate delta-isomerase (358 aa).

12–13 (RK) provides a ligand contact to substrate. Residues 69–71 (AMT), Ser99, and Asn128 contribute to the FMN site. Gln158 contacts substrate. Mg(2+) is bound at residue Glu159. Residues Lys190, Thr220, 267-269 (GIR), and 288-289 (AG) each bind FMN.

Belongs to the IPP isomerase type 2 family. In terms of assembly, homooctamer. Dimer of tetramers. It depends on FMN as a cofactor. The cofactor is NADPH. Mg(2+) serves as cofactor.

It localises to the cytoplasm. It catalyses the reaction isopentenyl diphosphate = dimethylallyl diphosphate. Its function is as follows. Involved in the biosynthesis of isoprenoids. Catalyzes the 1,3-allylic rearrangement of the homoallylic substrate isopentenyl (IPP) to its allylic isomer, dimethylallyl diphosphate (DMAPP). This chain is Isopentenyl-diphosphate delta-isomerase, found in Listeria monocytogenes serovar 1/2a (strain ATCC BAA-679 / EGD-e).